The sequence spans 389 residues: Xylose isomerase (389 aa).

Catalysis depends on residues H54 and D57. Residues E181, E217, H220, D245, D255, D257, and D287 each contribute to the Mg(2+) site.

This sequence belongs to the xylose isomerase family. As to quaternary structure, homotetramer. Requires Mg(2+) as cofactor.

It localises to the cytoplasm. It catalyses the reaction alpha-D-xylose = alpha-D-xylulofuranose. Involved in D-xylose catabolism. This is Xylose isomerase (xylA) from Streptomyces violaceusniger.